A 226-amino-acid chain; its full sequence is ATP-dependent dethiobiotin synthetase BioD (226 aa).

12–17 (GVGKTV) is an ATP binding site. Residue T16 coordinates Mg(2+). K37 is a catalytic residue. Residue T41 participates in substrate binding. Residues D49, 108–111 (EGAG), 169–170 (GS), and 197–199 (PAG) each bind ATP. Positions 49 and 108 each coordinate Mg(2+).

This sequence belongs to the dethiobiotin synthetase family. In terms of assembly, homodimer. Requires Mg(2+) as cofactor.

It localises to the cytoplasm. The enzyme catalyses (7R,8S)-7,8-diammoniononanoate + CO2 + ATP = (4R,5S)-dethiobiotin + ADP + phosphate + 3 H(+). The protein operates within cofactor biosynthesis; biotin biosynthesis; biotin from 7,8-diaminononanoate: step 1/2. In terms of biological role, catalyzes a mechanistically unusual reaction, the ATP-dependent insertion of CO2 between the N7 and N8 nitrogen atoms of 7,8-diaminopelargonic acid (DAPA, also called 7,8-diammoniononanoate) to form a ureido ring. In Mycobacterium bovis (strain ATCC BAA-935 / AF2122/97), this protein is ATP-dependent dethiobiotin synthetase BioD.